We begin with the raw amino-acid sequence, 156 residues long: Endoribonuclease YbeY (156 aa).

H117, H121, and H127 together coordinate Zn(2+).

This sequence belongs to the endoribonuclease YbeY family. Zn(2+) is required as a cofactor.

Its subcellular location is the cytoplasm. Functionally, single strand-specific metallo-endoribonuclease involved in late-stage 70S ribosome quality control and in maturation of the 3' terminus of the 16S rRNA. This Herminiimonas arsenicoxydans protein is Endoribonuclease YbeY.